The chain runs to 205 residues: Ras-related protein Rab-18-B (205 aa).

GTP-binding residues include Ser17, Gly20, Lys21, Ser22, Ser23, Asp34, Pro35, Thr40, Gly66, Lys123, Asp125, and Ala152. Ser22 provides a ligand contact to Mg(2+). Short sequence motifs (switch) lie at residues 31 to 45 (DTFDPELAATIGVDF) and 63 to 80 (DTAGQERFRTLTPSYYRG). Residue Thr40 participates in Mg(2+) binding. Cys198 carries the S-palmitoyl cysteine lipid modification. Cys202 bears the Cysteine methyl ester mark. Cys202 carries the S-geranylgeranyl cysteine lipid modification. Residues 203-205 (SLV) constitute a propeptide, removed in mature form.

Belongs to the small GTPase superfamily. Rab family. It depends on Mg(2+) as a cofactor.

Its subcellular location is the endoplasmic reticulum membrane. The protein resides in the golgi apparatus. It is found in the cis-Golgi network membrane. It localises to the lipid droplet. The protein localises to the apical cell membrane. The enzyme catalyses GTP + H2O = GDP + phosphate + H(+). Regulated by guanine nucleotide exchange factors (GEFs) which promote the exchange of bound GDP for free GTP. Regulated by GTPase activating proteins (GAPs) which increase the GTP hydrolysis activity at the ER membrane. Inhibited by GDP dissociation inhibitors (GDIs) which prevent Rab-GDP dissociation. Functionally, the small GTPases Rab are key regulators of intracellular membrane trafficking, from the formation of transport vesicles to their fusion with membranes. Rabs cycle between an inactive GDP-bound form and an active GTP-bound form that is able to recruit to membranes different sets of downstream effectors directly responsible for vesicle formation, movement, tethering and fusion. Required for the localization of ZFYVE1 to lipid droplets and for its function in mediating the formation of endoplasmic reticulum-lipid droplets (ER-LD) contacts. Also required for maintaining endoplasmic reticulum structure. Plays a role in apical endocytosis/recycling. Plays a key role in eye and brain development and neurodegeneration. In Danio rerio (Zebrafish), this protein is Ras-related protein Rab-18-B (rab18b).